The following is a 281-amino-acid chain: Insecticidal crystal toxin protein (281 aa).

9 antigenic epitope regions span residues 54 to 78 (NYSH…VYTF), 91 to 104 (IYTH…AVKA), 108 to 116 (GTASKVVQG), 131 to 148 (FKIT…FIRI), 160 to 172 (AVIN…VAEL), 189 to 196 (KYKDFQYL), 208 to 216 (QNISLVFNR), 221 to 236 (TNTT…LPIT), and 247 to 256 (KLETVQQIIN).

The protein belongs to the delta endotoxin family.

Its function is as follows. Promotes colloidosmotic lysis by binding to the midgut epithelial cells of insects. Active against Mamestra brassicae. This Bacillus thuringiensis subsp. kurstaki protein is Insecticidal crystal toxin protein.